We begin with the raw amino-acid sequence, 309 residues long: Malate dehydrogenase (309 aa).

Residues 9-14 (GAGAVG) and Asp-33 each bind NAD(+). Substrate contacts are provided by Arg-82 and Arg-88. Residues Asn-95 and 118–120 (VTN) each bind NAD(+). Substrate contacts are provided by Asn-120 and Arg-151. His-175 functions as the Proton acceptor in the catalytic mechanism.

Belongs to the LDH/MDH superfamily. MDH type 3 family.

The catalysed reaction is (S)-malate + NAD(+) = oxaloacetate + NADH + H(+). Catalyzes the reversible oxidation of malate to oxaloacetate. The sequence is that of Malate dehydrogenase from Thermomicrobium roseum (strain ATCC 27502 / DSM 5159 / P-2).